The primary structure comprises 89 residues: MAHKKGTGSTRNGRDSRSQRLGVKRYGGQVVKAGNILIRQRGTKVHPGKNVGRGGDDTLFALIDGVVKFEYKDKSRRQVSVYPAEVSAS.

The segment at 1 to 24 (MAHKKGTGSTRNGRDSRSQRLGVK) is disordered.

The protein belongs to the bacterial ribosomal protein bL27 family.

The sequence is that of Large ribosomal subunit protein bL27 from Microcystis aeruginosa (strain NIES-843 / IAM M-2473).